A 583-amino-acid polypeptide reads, in one-letter code: Arginine--tRNA ligase (583 aa).

The short motif at 121–131 (ANPTGPLHLGH) is the 'HIGH' region element.

The protein belongs to the class-I aminoacyl-tRNA synthetase family. In terms of assembly, monomer.

The protein localises to the cytoplasm. It carries out the reaction tRNA(Arg) + L-arginine + ATP = L-arginyl-tRNA(Arg) + AMP + diphosphate. In Aquifex aeolicus (strain VF5), this protein is Arginine--tRNA ligase (argS).